A 1423-amino-acid polypeptide reads, in one-letter code: DNA-directed RNA polymerase subunit beta' (1423 aa).

Zn(2+) is bound by residues C70, C72, C85, and C88. Residues D461, D463, and D465 each coordinate Mg(2+). 4 residues coordinate Zn(2+): C809, C883, C890, and C893. The disordered stretch occupies residues 1383 to 1423 (EEHAAELRQPVQADTGDDPLGAVVGESHGTDADAGDYLTEE).

It belongs to the RNA polymerase beta' chain family. The RNAP catalytic core consists of 2 alpha, 1 beta, 1 beta' and 1 omega subunit. When a sigma factor is associated with the core the holoenzyme is formed, which can initiate transcription. Requires Mg(2+) as cofactor. It depends on Zn(2+) as a cofactor.

The catalysed reaction is RNA(n) + a ribonucleoside 5'-triphosphate = RNA(n+1) + diphosphate. In terms of biological role, DNA-dependent RNA polymerase catalyzes the transcription of DNA into RNA using the four ribonucleoside triphosphates as substrates. The sequence is that of DNA-directed RNA polymerase subunit beta' from Rhizorhabdus wittichii (strain DSM 6014 / CCUG 31198 / JCM 15750 / NBRC 105917 / EY 4224 / RW1) (Sphingomonas wittichii).